Reading from the N-terminus, the 363-residue chain is Putative type I specificity subunit S.MpnORF507P (363 aa).

The protein belongs to the type-I restriction system S methylase family. As to quaternary structure, the methyltransferase is composed of M and S polypeptides.

The specificity (S) subunit of a type I methyltransferase (MTase); this subunit dictates DNA sequence specificity. The single R subunit has multiple frameshifts and is probably not expressed. The polypeptide is Putative type I specificity subunit S.MpnORF507P (Mycoplasma pneumoniae (strain ATCC 29342 / M129 / Subtype 1) (Mycoplasmoides pneumoniae)).